A 360-amino-acid chain; its full sequence is Phospho-N-acetylmuramoyl-pentapeptide-transferase (360 aa).

Transmembrane regions (helical) follow at residues 27–47, 69–89, 93–113, 134–154, 168–188, 199–219, 239–259, 262–282, 288–308, and 337–357; these read GAFLTALIFGFVFGKPLINVL, VGTPTMGGLLIVGALLFSTLM, WDNPFVWLVLFVTMSFGLIGF, LLLGFVIAIVAALWASWNHPA, VLLNLGYLYVPFCICVIVGAA, GLAIMPVMIAAGTLGIIAYAV, ILIFTSALFGGGLGFLWYNAP, AVFMGDTGSLALGGALGAIAI, LVLAIVGGLFVVEALSVIIQV, and TIVIRFWIISLILAMIGLATL.

This sequence belongs to the glycosyltransferase 4 family. MraY subfamily. Mg(2+) serves as cofactor.

Its subcellular location is the cell inner membrane. It carries out the reaction UDP-N-acetyl-alpha-D-muramoyl-L-alanyl-gamma-D-glutamyl-meso-2,6-diaminopimeloyl-D-alanyl-D-alanine + di-trans,octa-cis-undecaprenyl phosphate = di-trans,octa-cis-undecaprenyl diphospho-N-acetyl-alpha-D-muramoyl-L-alanyl-D-glutamyl-meso-2,6-diaminopimeloyl-D-alanyl-D-alanine + UMP. Its pathway is cell wall biogenesis; peptidoglycan biosynthesis. In terms of biological role, catalyzes the initial step of the lipid cycle reactions in the biosynthesis of the cell wall peptidoglycan: transfers peptidoglycan precursor phospho-MurNAc-pentapeptide from UDP-MurNAc-pentapeptide onto the lipid carrier undecaprenyl phosphate, yielding undecaprenyl-pyrophosphoryl-MurNAc-pentapeptide, known as lipid I. The polypeptide is Phospho-N-acetylmuramoyl-pentapeptide-transferase (Ruegeria sp. (strain TM1040) (Silicibacter sp.)).